The sequence spans 124 residues: Small ribosomal subunit protein uS12 (124 aa).

The tract at residues 1–28 (MPTIQQLIRTERQSSKAKTKSPALKSCP) is disordered. The residue at position 89 (aspartate 89) is a 3-methylthioaspartic acid. A disordered region spans residues 104–124 (TAGVKDRRQSRSKYGAKTPKE).

This sequence belongs to the universal ribosomal protein uS12 family. As to quaternary structure, part of the 30S ribosomal subunit. Contacts proteins S8 and S17. May interact with IF1 in the 30S initiation complex.

With S4 and S5 plays an important role in translational accuracy. Its function is as follows. Interacts with and stabilizes bases of the 16S rRNA that are involved in tRNA selection in the A site and with the mRNA backbone. Located at the interface of the 30S and 50S subunits, it traverses the body of the 30S subunit contacting proteins on the other side and probably holding the rRNA structure together. The combined cluster of proteins S8, S12 and S17 appears to hold together the shoulder and platform of the 30S subunit. The protein is Small ribosomal subunit protein uS12 of Synechococcus sp. (strain WH7803).